Consider the following 452-residue polypeptide: Tubulin gamma chain (452 aa).

A GTP-binding site is contributed by 142–148 (AGGTGSG).

It belongs to the tubulin family.

The protein resides in the cytoplasm. Its subcellular location is the cytoskeleton. The protein localises to the microtubule organizing center. It is found in the centrosome. Its function is as follows. Tubulin is the major constituent of microtubules. The gamma chain is found at microtubule organizing centers (MTOC) such as the spindle poles or the centrosome, suggesting that it is involved in the minus-end nucleation of microtubule assembly. The sequence is that of Tubulin gamma chain (G-TUB) from Plasmodium falciparum (isolate NF54).